Here is a 100-residue protein sequence, read N- to C-terminus: Probable antitoxin MazE1 (100 aa).

Residues 77–100 (PYESEAERSAARARRNARQQRSAQ) are disordered.

As to quaternary structure, forms a complex with cognate toxin MazF1.

In terms of biological role, probable antitoxin component of a type II toxin-antitoxin (TA) system. Labile antitoxin that binds to cognate MazF1 toxin and counteracts its endoribonuclease activity. This chain is Probable antitoxin MazE1 (mazE1), found in Mycobacterium bovis (strain ATCC BAA-935 / AF2122/97).